The chain runs to 1381 residues: MKAPAVLAPGILVLLFTLVQRSNGECKEALAKSEMNVNMKYQLPNFTAETPIQNVILHEHHIFLGATNYIYVLNEEDLQKVAEYKTGPVLEHPDCFPCQDCSSKANLSGGVWKDNINMALVVDTYYDDQLISCGSGNRGTCQRHVFPHNHTADIQSEVHCIFSPQIEEPSQCPDCVVSALGAKVLSSVKDRFINFFVGNTINSSYFPHHPLHSISVRRLKETKDGFVFLTDQSYIDVLPEFRDSYPIKYVHAFESNNFIYFLSVQRETLNAQTFHTRIIRFCSINSGLHSYMEMPLECILTEKRKKRSTKKEVFNILQAAYVSKPGAQLARQIGASLNDDILFGVFAQSKPDSAEPMDRSAMCAFPIKYVNDFFNKIVNKNNVRCLQHFYGPNHEHCFNRTLLRNSSGCEARRDEYRAEFTTALQRVDLFMGQFSEVLLTSISTFVKGDLTIANLGTSEGRFMQVVVSRSGPSTPHVNFLLDSHPVSPEVIVEHPLNQNGYTLVVTGKKITKIPLNGLGCRHFQSCSQCLSAPPFVQCGWCQDKCVRSEDCPSGTWTQQICLPAIYKVFPTSAPLEGGTRLTICGWDFGFRRNNKFDLKKTRVLLGNESCTLTLSESTMNTLKCTVGPAMNKHFNMSIIISNGHGTTQYSTFSYVDPIITSISPKYGPMAGGTLLTLTGNYLNSGNSRHISIGGKTCTLKSVSNSILECYTPAQTISTEFAVKLKIDLANRETSIFSYREDPIVYEIHPTKSFISGGSTITGVGKNLHSVSVPRMVINVHEAGRNFTVACQHRSNSEIICCTTPSLQQLNLQLPLKTKAFFMLDGILSKYFDLIYVHNPVFKPFEKPVMISMGNENVLEIKGNDIDPEAVKGEVLKVGNKSCENIHLHSEAVLCTVPNDLLKLNSELNIEWKQAISSTVLGKVIVQPDQNFTGLIAGVVSISIALLLLLGLFLWLKKRKQIKDLGSELVRYDARVHTPHLDRLVSARSVSPTTEMVSNESVDYRATFPEDQFPNSSQNGSCRQVQYPLTDMSPILTSGDSDISSPLLQNTVHIDLSALNPELVQAVQHVVIGPSSLIVHFNEVIGRGHFGCVYHGTLLDNDGKKIHCAVKSLNRITDIGEVSQFLTEGIIMKDFSHPNVLSLLGICLRSEGSPLVVLPYMKHGDLRNFIRNETHNPTVKDLIGFGLQVAKGMKYLASKKFVHRDLAARNCMLDEKFTVKVADFGLARDMYDKEYYSVHNKTGAKLPVKWMALESLQTQKFTTKSDVWSFGVLLWELMTRGAPPYPDVNTFDITVYLLQGRRLLQPEYCPDPLYEVMLKCWHPKAEMRPSFSELVSRISAIFSTFIGEHYVHVNATYVNVKCVAPYPSLLSSEDNADDEVDT.

A signal peptide spans 1–24; the sequence is MKAPAVLAPGILVLLFTLVQRSNG. Topologically, residues 25–932 are extracellular; that stretch reads ECKEALAKSE…VIVQPDQNFT (908 aa). The 489-residue stretch at 27-515 folds into the Sema domain; the sequence is KEALAKSEMN…TGKKITKIPL (489 aa). Asparagine 45 carries N-linked (GlcNAc...) asparagine glycosylation. 4 disulfides stabilise this stretch: cysteine 95/cysteine 101, cysteine 98/cysteine 160, cysteine 133/cysteine 141, and cysteine 172/cysteine 175. Asparagine 106 carries N-linked (GlcNAc...) asparagine glycosylation. Asparagine 149 carries N-linked (GlcNAc...) asparagine glycosylation. An N-linked (GlcNAc...) asparagine glycan is attached at asparagine 202. 2 cysteine pairs are disulfide-bonded: cysteine 298–cysteine 363 and cysteine 385–cysteine 397. 2 N-linked (GlcNAc...) asparagine glycosylation sites follow: asparagine 399 and asparagine 405. Intrachain disulfides connect cysteine 520–cysteine 538, cysteine 526–cysteine 561, cysteine 529–cysteine 545, and cysteine 541–cysteine 551. IPT/TIG domains lie at 563 to 655, 657 to 739, and 742 to 836; these read PAIY…FSYV, PIIT…FSYR, and PIVY…LIYV. O-linked (Man) threonine glycosylation occurs at threonine 582. N-linked (GlcNAc...) asparagine glycans are attached at residues asparagine 607 and asparagine 635. Threonine 676 and threonine 761 each carry an O-linked (Man) threonine glycan. N-linked (GlcNAc...) asparagine glycosylation is found at asparagine 785, asparagine 879, and asparagine 930. The helical transmembrane segment at 933–955 threads the bilayer; sequence GLIAGVVSISIALLLLLGLFLWL. The Cytoplasmic segment spans residues 956–1381; the sequence is KKRKQIKDLG…EDNADDEVDT (426 aa). Serine 966 is subject to Phosphoserine. A Phosphothreonine modification is found at threonine 977. A phosphoserine mark is found at serine 990, serine 997, and serine 1000. The residue at position 1003 (tyrosine 1003) is a Phosphotyrosine. Residues 1078–1345 enclose the Protein kinase domain; sequence VHFNEVIGRG…RISAIFSTFI (268 aa). Residues 1084 to 1092 and lysine 1110 each bind ATP; that span reads IGRGHFGCV. Aspartate 1204 acts as the Proton acceptor in catalysis. The interval 1212-1381 is interaction with RANBP9; that stretch reads LDEKFTVKVA…EDNADDEVDT (170 aa). Phosphotyrosine is present on tyrosine 1230. Phosphotyrosine; by autocatalysis occurs at positions 1234 and 1235. Threonine 1289 bears the Phosphothreonine mark. The tract at residues 1320 to 1359 is interaction with MUC20; it reads WHPKAEMRPSFSELVSRISAIFSTFIGEHYVHVNATYVNV. Phosphotyrosine; by autocatalysis occurs at positions 1349 and 1356. Tyrosine 1365 bears the Phosphotyrosine mark.

This sequence belongs to the protein kinase superfamily. Tyr protein kinase family. Heterodimer made of an alpha chain (50 kDa) and a beta chain (145 kDa) which are disulfide linked. Binds PLXNB1. Interacts when phosphorylated with downstream effectors including STAT3, PIK3R1, SRC, PCLG1, GRB2 and GAB1. Interacts with SPSB1, SPSB2 and SPSB4. Interacts with INPP5D/SHIP1. When phosphorylated at Tyr-1356, interacts with INPPL1/SHIP2. Interacts with RANBP9 and RANBP10, as well as SPSB1, SPSB2, SPSB3 and SPSB4. SPSB1 binding occurs in the presence and in the absence of HGF, however HGF treatment has a positive effect on this interaction. Interacts with MUC20; prevents interaction with GRB2 and suppresses hepatocyte growth factor-induced cell proliferation. Interacts with GRB10. Interacts with PTPN1 and PTPN2. Interacts with HSP90AA1 and HSP90AB1; the interaction suppresses MET kinase activity. Interacts with tensin TNS3. Interacts (when phosphorylated) with tensin TNS4 (via SH2 domain); the interaction increases MET protein stability by inhibiting MET endocytosis and subsequent lysosomal degradation. Autophosphorylated in response to ligand binding on Tyr-1234 and Tyr-1235 in the kinase domain leading to further phosphorylation of Tyr-1349 and Tyr-1356 in the C-terminal multifunctional docking site. Dephosphorylated by PTPRJ at Tyr-1349 and Tyr-1365. Dephosphorylated by PTPN1 and PTPN2. In terms of processing, ubiquitinated. Ubiquitination by CBL regulates the receptor stability and activity through proteasomal degradation. Post-translationally, O-mannosylation of IPT/TIG domains by TMEM260 is required for protein maturation. O-mannosylated residues are composed of single mannose glycans that are not elongated or modified.

The protein resides in the membrane. The enzyme catalyses L-tyrosyl-[protein] + ATP = O-phospho-L-tyrosyl-[protein] + ADP + H(+). Its activity is regulated as follows. In its inactive state, the C-terminal tail interacts with the catalytic domain and inhibits the kinase activity. Upon ligand binding, the C-terminal tail is displaced and becomes phosphorylated, thus increasing the kinase activity. Its function is as follows. Receptor tyrosine kinase that transduces signals from the extracellular matrix into the cytoplasm by binding to hepatocyte growth factor/HGF ligand. Regulates many physiological processes including proliferation, scattering, morphogenesis and survival. Ligand binding at the cell surface induces autophosphorylation of MET on its intracellular domain that provides docking sites for downstream signaling molecules. Following activation by ligand, interacts with the PI3-kinase subunit PIK3R1, PLCG1, SRC, GRB2, STAT3 or the adapter GAB1. Recruitment of these downstream effectors by MET leads to the activation of several signaling cascades including the RAS-ERK, PI3 kinase-AKT, or PLCgamma-PKC. The RAS-ERK activation is associated with the morphogenetic effects while PI3K/AKT coordinates prosurvival effects. During embryonic development, MET signaling plays a role in gastrulation, development and migration of muscles and neuronal precursors, angiogenesis and kidney formation. In adults, participates in wound healing as well as organ regeneration and tissue remodeling. Also promotes differentiation and proliferation of hematopoietic cells. The sequence is that of Hepatocyte growth factor receptor (MET) from Colobus guereza (Mantled guereza).